The chain runs to 216 residues: ATP-dependent Clp protease proteolytic subunit (216 aa).

Residue S120 is the Nucleophile of the active site. H145 is an active-site residue.

The protein belongs to the peptidase S14 family. As to quaternary structure, fourteen ClpP subunits assemble into 2 heptameric rings which stack back to back to give a disk-like structure with a central cavity, resembling the structure of eukaryotic proteasomes.

The protein resides in the cytoplasm. It carries out the reaction Hydrolysis of proteins to small peptides in the presence of ATP and magnesium. alpha-casein is the usual test substrate. In the absence of ATP, only oligopeptides shorter than five residues are hydrolyzed (such as succinyl-Leu-Tyr-|-NHMec, and Leu-Tyr-Leu-|-Tyr-Trp, in which cleavage of the -Tyr-|-Leu- and -Tyr-|-Trp bonds also occurs).. Functionally, cleaves peptides in various proteins in a process that requires ATP hydrolysis. Has a chymotrypsin-like activity. Plays a major role in the degradation of misfolded proteins. The protein is ATP-dependent Clp protease proteolytic subunit of Cupriavidus pinatubonensis (strain JMP 134 / LMG 1197) (Cupriavidus necator (strain JMP 134)).